The chain runs to 107 residues: Putative protein RFPL3S (107 aa).

Strongly expressed in the testis and weakly in brain, placenta and pancreas.

The polypeptide is Putative protein RFPL3S (RFPL3S) (Homo sapiens (Human)).